The chain runs to 490 residues: GTPase Der (490 aa).

2 EngA-type G domains span residues 1–165 and 227–400; these read MRIA…QIPV and LKVA…TIAT. GTP is bound by residues 7-14, 54-58, 117-120, 233-240, 280-284, and 345-348; these read GRPNVGKS, DTGGV, NKAD, GHPNVGKS, DTAGL, and NKWD. In terms of domain architecture, KH-like spans 401-485; that stretch reads TKLSTSLVNK…PFDLEYKAKP (85 aa).

It belongs to the TRAFAC class TrmE-Era-EngA-EngB-Septin-like GTPase superfamily. EngA (Der) GTPase family. As to quaternary structure, associates with the 50S ribosomal subunit.

In terms of biological role, GTPase that plays an essential role in the late steps of ribosome biogenesis. The chain is GTPase Der from Chlamydia trachomatis serovar A (strain ATCC VR-571B / DSM 19440 / HAR-13).